The sequence spans 241 residues: Chaperone protein HifB (241 aa).

An N-terminal signal peptide occupies residues 1–27 (MGKTMFKKTLLFFTALFFAALCAFSAN).

It belongs to the periplasmic pilus chaperone family.

The protein resides in the periplasm. Functionally, mediates assembly of pili by forming soluble multimeric complexes with pili subunits as an intermediate step in the assembly process. This protein is involved in type B pili (HifA) assembly. The chain is Chaperone protein HifB (hifB) from Haemophilus influenzae.